A 530-amino-acid polypeptide reads, in one-letter code: Developmental and secondary metabolism regulator VEL1 (530 aa).

One can recognise a Velvet domain in the interval 26–220 (NRSLWYQMTV…ADQGCQVRIR (195 aa)). A Nuclear localization signal motif is present at residues 40–45 (ERARAC). A disordered region spans residues 206–516 (LSKTVADQGC…HDQGWYSRAD (311 aa)). Positions 244–253 (FERREEDFGR) are enriched in basic and acidic residues. Over residues 295–305 (YPPPPPPPSYE) the composition is skewed to pro residues. Polar residues predominate over residues 347 to 356 (YAPTAQSPYS). The span at 380-389 (VKHDLYDRRQ) shows a compositional bias: basic and acidic residues. The span at 390 to 404 (STSSYVPPSPSVYST) shows a compositional bias: low complexity. Residues 415-426 (SYPPTPVAAPRP) are compositionally biased toward pro residues. The segment at 429-460 (MHSQTSLPALKIDQLVSPVSPLPPIEPQTGPA) is PEST. Residues 478–490 (FAQSTRPLHNGQR) show a composition bias toward polar residues.

This sequence belongs to the velvet family. VeA subfamily. As to quaternary structure, component of the heterotrimeric velvet complex composed of LAE1, VEL1 and VEL2; VEL1 acting as a bridging protein between LAE1 and VEL2. Interacts with LAE1.

It localises to the nucleus. Its subcellular location is the cytoplasm. Component of the velvet transcription factor complex that controls sexual/asexual developmental ratio in response to light, promoting sexual development in the darkness while stimulating asexual sporulation under illumination. The velvet complex hat acts as a global regulator for secondary metabolite gene expression. Controls positively the expression of the gibberellins, fumonisins and fusarin C gene clusters. Controls the expression of the fusaric acid gene cluster. Controls negatively the expression of the bikaverin gene cluster. Regulates the expression of laeA. Plays a crucial role in virulence. This is Developmental and secondary metabolism regulator VEL1 from Gibberella fujikuroi (strain CBS 195.34 / IMI 58289 / NRRL A-6831) (Bakanae and foot rot disease fungus).